We begin with the raw amino-acid sequence, 315 residues long: tRNA-specific adenosine deaminase subunit tad3 (315 aa).

In terms of domain architecture, CMP/dCMP-type deaminase spans 158-299 (KRIESILEDL…AELNHRYLAY (142 aa)). Zn(2+) is bound by residues histidine 211, cysteine 253, and cysteine 256.

The protein belongs to the cytidine and deoxycytidylate deaminase family. ADAT3 subfamily. As to quaternary structure, heterodimer with Tad2.

The protein localises to the cytoplasm. It is found in the nucleus. In terms of biological role, structural subunit of tRNA-specific adenosine deaminase, which deaminates adenosine-34 (the first, also called wobble position of the anticodon) to inosine in many tRNAs. Inosine-34 allows the decoding of 3 different nucleotides at the third position of mRNA codons, as inosine is able to pair with U, C, and A. The wobble inosine tRNA modification is essential for cell cycle progression in the G1/S and G2/M transitions in fission yeast. This chain is tRNA-specific adenosine deaminase subunit tad3 (tad3), found in Schizosaccharomyces pombe (strain 972 / ATCC 24843) (Fission yeast).